A 262-amino-acid polypeptide reads, in one-letter code: MSDILEKILATKRAEVAAGLARVPLAEMRARAEAAAPARDFVGALRAKRDAGRPAVIAEIKKASPSKGVIRADFRPAEIAASYEKGGAACLSILTDAEYFQGSADYLKAARAACTLPVLRKDFMIDAYQVYEARAMGADCILLIVAALELPAMQALEALANELGMAVLVESHDAAELDAALTLRTPLQGINNRNLRTFEVSLDTTLSLLPKIGPERIVVTESGILAPADVDTMRSRGVNTFLVGEAFMRAADPGAELARLFA.

The protein belongs to the TrpC family.

The catalysed reaction is 1-(2-carboxyphenylamino)-1-deoxy-D-ribulose 5-phosphate + H(+) = (1S,2R)-1-C-(indol-3-yl)glycerol 3-phosphate + CO2 + H2O. The protein operates within amino-acid biosynthesis; L-tryptophan biosynthesis; L-tryptophan from chorismate: step 4/5. The chain is Indole-3-glycerol phosphate synthase from Thiobacillus denitrificans (strain ATCC 25259 / T1).